We begin with the raw amino-acid sequence, 265 residues long: Small ribosomal subunit protein uS2 (265 aa).

Belongs to the universal ribosomal protein uS2 family.

The sequence is that of Small ribosomal subunit protein uS2 from Aliarcobacter butzleri (strain RM4018) (Arcobacter butzleri).